Reading from the N-terminus, the 274-residue chain is Probable WRKY transcription factor 49 (274 aa).

A DNA-binding region (WRKY) is located at residues 108–173; the sequence is NSNGMCDDGY…YEGFHFHYTY (66 aa). A disordered region spans residues 188-228; that stretch reads KTKIHKHNAQDMNKKSQTQEESKEAQLGELTNQNHPVNKAQ. A coiled-coil region spans residues 193–222; it reads KHNAQDMNKKSQTQEESKEAQLGELTNQNH. Basic and acidic residues predominate over residues 195–213; sequence NAQDMNKKSQTQEESKEAQ. Residues 216 to 228 show a composition bias toward polar residues; that stretch reads ELTNQNHPVNKAQ.

The protein belongs to the WRKY group II-c family.

Its subcellular location is the nucleus. In terms of biological role, transcription factor. Interacts specifically with the W box (5'-(T)TGAC[CT]-3'), a frequently occurring elicitor-responsive cis-acting element. The sequence is that of Probable WRKY transcription factor 49 (WRKY49) from Arabidopsis thaliana (Mouse-ear cress).